The sequence spans 204 residues: Intraflagellar transport protein 27 (204 aa).

Residues 23–30 (GEATVGKS), 75–79 (DTAGS), and 136–139 (NKTD) contribute to the GTP site.

The protein belongs to the small GTPase superfamily. Rab family. In terms of assembly, component of the IFT complex B, the core composed of IFT25, IFT27, IFT46, IFT52, IFT74, IFT81 and IFT88 as well as associated subunits IFT20, IFT57, IFT80 and IFT172. Interacts with IFT25; the interaction is direct.

The protein resides in the cell projection. It is found in the cilium. Its subcellular location is the flagellum. It localises to the cytoplasm. The protein localises to the cytoskeleton. The protein resides in the flagellum basal body. Functionally, small GTPase-like component of the intraflagellar transport (IFT) complex B. Forms a subcomplex within the IFT complex B with IFT25. Has very low GTPase activity either because it lacks the conserved catalytic Gln in position 79 or because it requires some GTPase-activating protein (GAP) for GTP turnover. This Chlamydomonas reinhardtii (Chlamydomonas smithii) protein is Intraflagellar transport protein 27 (IFT27).